Reading from the N-terminus, the 308-residue chain is Porphobilinogen deaminase (308 aa).

Cys241 is modified (S-(dipyrrolylmethanemethyl)cysteine).

This sequence belongs to the HMBS family. As to quaternary structure, monomer. Requires dipyrromethane as cofactor.

The enzyme catalyses 4 porphobilinogen + H2O = hydroxymethylbilane + 4 NH4(+). It participates in porphyrin-containing compound metabolism; protoporphyrin-IX biosynthesis; coproporphyrinogen-III from 5-aminolevulinate: step 2/4. Its function is as follows. Tetrapolymerization of the monopyrrole PBG into the hydroxymethylbilane pre-uroporphyrinogen in several discrete steps. The polypeptide is Porphobilinogen deaminase (Exiguobacterium sibiricum (strain DSM 17290 / CCUG 55495 / CIP 109462 / JCM 13490 / 255-15)).